An 85-amino-acid polypeptide reads, in one-letter code: UPF0297 protein LBA0418 (85 aa).

This sequence belongs to the UPF0297 family.

The protein is UPF0297 protein LBA0418 of Lactobacillus acidophilus (strain ATCC 700396 / NCK56 / N2 / NCFM).